Here is a 311-residue protein sequence, read N- to C-terminus: 4-hydroxy-tetrahydrodipicolinate synthase (311 aa).

Pyruvate is bound at residue Thr51. Tyr140 functions as the Proton donor/acceptor in the catalytic mechanism. Lys168 functions as the Schiff-base intermediate with substrate in the catalytic mechanism. Ile209 serves as a coordination point for pyruvate.

Belongs to the DapA family. Homotetramer; dimer of dimers.

The protein resides in the cytoplasm. The catalysed reaction is L-aspartate 4-semialdehyde + pyruvate = (2S,4S)-4-hydroxy-2,3,4,5-tetrahydrodipicolinate + H2O + H(+). It participates in amino-acid biosynthesis; L-lysine biosynthesis via DAP pathway; (S)-tetrahydrodipicolinate from L-aspartate: step 3/4. Catalyzes the condensation of (S)-aspartate-beta-semialdehyde [(S)-ASA] and pyruvate to 4-hydroxy-tetrahydrodipicolinate (HTPA). The sequence is that of 4-hydroxy-tetrahydrodipicolinate synthase from Streptococcus pneumoniae (strain ATCC BAA-255 / R6).